The primary structure comprises 767 residues: Protein transport protein Sec23B (767 aa).

Alanine 2 bears the N-acetylalanine mark. The Zn(2+) site is built by cysteine 61, cysteine 66, cysteine 85, and cysteine 88. Lysine 564 carries the post-translational modification N6-acetyllysine. Residues 634–720 (PEPVLLDSSS…EHGGSQARFL (87 aa)) form a Gelsolin-like repeat.

It belongs to the SEC23/SEC24 family. SEC23 subfamily. COPII is composed of at least five proteins: the Sec23/24 complex, the Sec13/31 complex and Sar1. Interacts with SAR1A.

The protein resides in the cytoplasmic vesicle. Its subcellular location is the COPII-coated vesicle membrane. It localises to the endoplasmic reticulum membrane. It is found in the cytoplasm. The protein localises to the cytosol. Component of the coat protein complex II (COPII) which promotes the formation of transport vesicles from the endoplasmic reticulum (ER). The coat has two main functions, the physical deformation of the endoplasmic reticulum membrane into vesicles and the selection of cargo molecules for their transport to the Golgi complex. This Mus musculus (Mouse) protein is Protein transport protein Sec23B.